A 289-amino-acid chain; its full sequence is Early E4 34 kDa protein (289 aa).

The protein belongs to the adenoviridae E4 30 to 34 kDa protein family. As to quaternary structure, interacts with E1B-55k.

It localises to the host nucleus. The protein resides in the host cytoplasm. Functionally, plays a major role to prevent cellular inhibition of viral genome replication by nuclear bodies. Assembles an SCF-like E3 ubiquitin ligase complex based on the cellular proteins ELOB, ELOC, CUL5 and RBX1, in cooperation with viral E1B-55K. This viral RING-type ligase ubiquitinates cellular substrates prior to proteasomal degradation: p53/TP53, LIG4, MRE11-RAD50-NBS1 (MRN) complex, ITGA3, DAXX and BLM. The protein is Early E4 34 kDa protein of Human adenovirus F serotype 40 (HAdV-40).